Reading from the N-terminus, the 1112-residue chain is DNA polymerase II large subunit (1112 aa).

Belongs to the archaeal DNA polymerase II family. Heterodimer of a large subunit and a small subunit.

The enzyme catalyses DNA(n) + a 2'-deoxyribonucleoside 5'-triphosphate = DNA(n+1) + diphosphate. It catalyses the reaction Exonucleolytic cleavage in the 3'- to 5'-direction to yield nucleoside 5'-phosphates.. In terms of biological role, possesses two activities: a DNA synthesis (polymerase) and an exonucleolytic activity that degrades single-stranded DNA in the 3'- to 5'-direction. Has a template-primer preference which is characteristic of a replicative DNA polymerase. This Cenarchaeum symbiosum (strain A) protein is DNA polymerase II large subunit.